A 690-amino-acid chain; its full sequence is Ectopic P granules protein 2 (690 aa).

Coiled-coil stretches lie at residues 20 to 181, 359 to 409, 458 to 494, and 560 to 643; these read IELA…EREV, ELLR…TIQE, LESG…SLLL, and ATIE…ETKR. The short motif at 61 to 64 is the LIR 1 element; sequence YSTL. Residues 381–385 are required for interaction with lgg-1; sequence DFKIL. Positions 666–690 are disordered; sequence EELDEEPKASTESEEKAEWEMVDEE. Residues 671–684 are compositionally biased toward basic and acidic residues; that stretch reads EPKASTESEEKAEW. An LIR 2 motif is present at residues 684–687; that stretch reads WEMV.

Interacts with sepa-1. Interacts (via the LIR motifs) with lgg-1 and lgg-2. Shows strong interaction with lgg-1 and weak interaction with lgg-2.

The protein resides in the cytoplasm. Functionally, involved in autophagy. Thought to act as an adapter protein that brings PGL granules to autophagic structures containing lgg-1. Association with other adapters such as sepa-1 is required for the accumulation and degradation of germ cell specific P-granules by autophagy in somatic cells. This ensures exclusive localization of the P-granules in germ cells. May also play a role in the removal of sepa-1 from somatic cells. In Caenorhabditis elegans, this protein is Ectopic P granules protein 2.